The chain runs to 304 residues: Acetylglutamate kinase (304 aa).

Substrate contacts are provided by residues 64-65, Arg86, and Asn181; that span reads GG.

This sequence belongs to the acetylglutamate kinase family. ArgB subfamily.

The protein localises to the plastid. Its subcellular location is the chloroplast. It catalyses the reaction N-acetyl-L-glutamate + ATP = N-acetyl-L-glutamyl 5-phosphate + ADP. It functions in the pathway amino-acid biosynthesis; L-arginine biosynthesis; N(2)-acetyl-L-ornithine from L-glutamate: step 2/4. Functionally, catalyzes the ATP-dependent phosphorylation of N-acetyl-L-glutamate. The protein is Acetylglutamate kinase of Cyanidium caldarium (Red alga).